Reading from the N-terminus, the 179-residue chain is Large ribosomal subunit protein uL6 (179 aa).

This sequence belongs to the universal ribosomal protein uL6 family. As to quaternary structure, part of the 50S ribosomal subunit.

In terms of biological role, this protein binds to the 23S rRNA, and is important in its secondary structure. It is located near the subunit interface in the base of the L7/L12 stalk, and near the tRNA binding site of the peptidyltransferase center. The protein is Large ribosomal subunit protein uL6 of Chlorobium chlorochromatii (strain CaD3).